A 38-amino-acid polypeptide reads, in one-letter code: Toxin Lqh 8/6 (38 aa).

4 disulfides stabilise this stretch: cysteine 2-cysteine 19, cysteine 5-cysteine 28, cysteine 16-cysteine 33, and cysteine 20-cysteine 35.

As to expression, expressed by the venom gland.

It is found in the secreted. Functionally, toxin with unknown function in healthy organisms. On glioma cells, interacts with chloride channels (probably ClC-3/CLCN3) and MMP2 at the surface of glioma cells. This complex is then internalized via caveolae, thus inhibiting the chloride channels necessary for cell shrinkage and tumor propagation. The protein is Toxin Lqh 8/6 of Leiurus hebraeus (Hebrew deathstalker scorpion).